The chain runs to 303 residues: D-alanine--D-alanine ligase B (303 aa).

The region spanning 103–298 (KLLWKGAGLP…YEDLCLKVLD (196 aa)) is the ATP-grasp domain. Residue 129–184 (ERQLGLPIFVKPSTEGSSIGVTKVKQPGELRAAFEEARKYDKVVIAEQFIGGGEYT) participates in ATP binding. Residues D252, E265, and N267 each coordinate Mg(2+).

Belongs to the D-alanine--D-alanine ligase family. The cofactor is Mg(2+). Requires Mn(2+) as cofactor.

The protein resides in the cytoplasm. It catalyses the reaction 2 D-alanine + ATP = D-alanyl-D-alanine + ADP + phosphate + H(+). The protein operates within cell wall biogenesis; peptidoglycan biosynthesis. In terms of biological role, cell wall formation. The polypeptide is D-alanine--D-alanine ligase B (Chromobacterium violaceum (strain ATCC 12472 / DSM 30191 / JCM 1249 / CCUG 213 / NBRC 12614 / NCIMB 9131 / NCTC 9757 / MK)).